A 151-amino-acid polypeptide reads, in one-letter code: Chaperonin GroEL (151 aa).

Residue 41 to 45 participates in ATP binding; the sequence is DGTTT.

It belongs to the chaperonin (HSP60) family. As to quaternary structure, forms a cylinder of 14 subunits composed of two heptameric rings stacked back-to-back. Interacts with the co-chaperonin GroES.

The protein localises to the cytoplasm. The catalysed reaction is ATP + H2O + a folded polypeptide = ADP + phosphate + an unfolded polypeptide.. Functionally, together with its co-chaperonin GroES, plays an essential role in assisting protein folding. The GroEL-GroES system forms a nano-cage that allows encapsulation of the non-native substrate proteins and provides a physical environment optimized to promote and accelerate protein folding. The sequence is that of Chaperonin GroEL from Mycolicibacterium fortuitum (Mycobacterium fortuitum).